Reading from the N-terminus, the 1476-residue chain is Copper-transporting ATPase 1 (1476 aa).

Topologically, residues 1-642 (MEPSMDVNSV…HKREIKQWRS (642 aa)) are cytoplasmic. 2 consecutive HMA domains span residues 8–74 (NSVT…FDAL) and 85–151 (TDTL…LETG). Residues Thr-18, Cys-19, and Cys-22 each contribute to the Cu(+) site. Residue Thr-152 is modified to Phosphothreonine. HMA domains follow at residues 171–237 (VVLK…FPAF) and 276–342 (STAT…PGQY). Cu(+)-binding residues include Cys-182, Cys-185, Cys-287, and Cys-290. Thr-326 is modified (phosphothreonine). Ser-338, Ser-352, Ser-356, and Ser-361 each carry phosphoserine. HMA domains lie at 376–442 (QETV…FDAV), 478–544 (SKCY…FGAT), and 554–620 (GILK…FEAS). Cu(+)-binding residues include Cys-387, Cys-390, Cys-489, Cys-492, Cys-565, and Cys-568. The helical transmembrane segment at 643–665 (SFLVSLFFCTPVMGLMMYMMAME) threads the bilayer. Asn-674 and Asn-685 each carry an N-linked (GlcNAc...) asparagine glycan. The next 3 membrane-spanning stretches (helical) occupy residues 695–717 (ILPG…QFFG), 736–760 (MDVL…VAMY), and 770–788 (SFDT…RWLE). Asn-887 carries N-linked (GlcNAc...) asparagine glycosylation. Residues 930–952 (YFVPFIVLVSIATLLVWIIIGFQ) traverse the membrane as a helical segment. Asn-953 carries an N-linked (GlcNAc...) asparagine glycan. A helical membrane pass occupies residues 978–998 (AFQASITVLCIACPCSLGLAT). The active-site 4-aspartylphosphate intermediate is Asp-1034. Asn-1130 and Asn-1134 each carry an N-linked (GlcNAc...) asparagine glycan. 2 helical membrane-spanning segments follow: residues 1347–1373 (INFL…IGLV) and 1379–1397 (GSAA…SLFL). Residues Ser-1420 and Ser-1422 each carry the phosphoserine modification. Asn-1448 carries an N-linked (GlcNAc...) asparagine glycan. 7 positions are modified to phosphoserine: Ser-1450, Ser-1453, Ser-1456, Ser-1459, Ser-1463, Ser-1466, and Ser-1476.

This sequence belongs to the cation transport ATPase (P-type) (TC 3.A.3) family. As to quaternary structure, monomer. Interacts with PDZD11. Interacts with ATOX1 and COMMD1. Interacts with TYRP1. Directly interacts with SOD3; this interaction is copper-dependent and is required for SOD3 activity. In terms of tissue distribution, expressed in most tissues except liver.

It localises to the golgi apparatus. It is found in the trans-Golgi network membrane. Its subcellular location is the cell membrane. The enzyme catalyses Cu(+)(in) + ATP + H2O = Cu(+)(out) + ADP + phosphate + H(+). Its function is as follows. May function in the export of copper from the cytoplasm to an intracellular organelle. It may serve as well for the export of other metals. The chain is Copper-transporting ATPase 1 (ATP7A) from Cricetulus griseus (Chinese hamster).